The chain runs to 192 residues: MSEYLLLLISTVLVNNFVLVKFLGLCPFMGVSSKLESAIGMSMATTFVLTLASILSYLVNQYLLLPFDLGYLRTMSFILVIAVVVQFTEMVVQKTSAALHRALGIYLPLITTNCAVLGVALLNVNEKHDFIQSAIYGFGAAVGFSLVLILFSAMRERLAAADVPEPFKGGAIAMITAGLMSLAFMGFTGLVK.

The next 6 membrane-spanning stretches (helical) occupy residues 5–25 (LLLL…FLGL), 39–59 (IGMS…SYLV), 65–85 (LPFD…AVVV), 102–122 (ALGI…VALL), 134–154 (AIYG…FSAM), and 171–191 (AIAM…TGLV).

This sequence belongs to the NqrDE/RnfAE family. The complex is composed of six subunits: RnfA, RnfB, RnfC, RnfD, RnfE and RnfG.

It localises to the cell inner membrane. Its function is as follows. Part of a membrane-bound complex that couples electron transfer with translocation of ions across the membrane. The polypeptide is Ion-translocating oxidoreductase complex subunit A (Shewanella oneidensis (strain ATCC 700550 / JCM 31522 / CIP 106686 / LMG 19005 / NCIMB 14063 / MR-1)).